The sequence spans 213 residues: Large ribosomal subunit protein uL3 (213 aa).

Residue glutamine 151 is modified to N5-methylglutamine.

This sequence belongs to the universal ribosomal protein uL3 family. In terms of assembly, part of the 50S ribosomal subunit. Forms a cluster with proteins L14 and L19. In terms of processing, methylated by PrmB.

Functionally, one of the primary rRNA binding proteins, it binds directly near the 3'-end of the 23S rRNA, where it nucleates assembly of the 50S subunit. The polypeptide is Large ribosomal subunit protein uL3 (Allorhizobium ampelinum (strain ATCC BAA-846 / DSM 112012 / S4) (Agrobacterium vitis (strain S4))).